We begin with the raw amino-acid sequence, 200 residues long: Gene 55 protein (200 aa).

A lipid anchor (S-palmitoyl cysteine; by host) is attached at cysteine 8.

Belongs to the herpesviridae UL51 family. In terms of assembly, oligomerizes. Interacts with ORF42; this interaction mediates ORF42 incorporation to virions. Phosphorylated. Post-translationally, palmitoylation is necessary for Golgi localization.

It localises to the virion tegument. The protein resides in the host cytoplasm. The protein localises to the host Golgi apparatus. In terms of biological role, plays several roles during the time course of infection, including egress of virus particles from the perinuclear space and secondary envelopment of cytoplasmic capsids that bud into specific trans-Golgi network (TGN)-derived membranes. The polypeptide is Gene 55 protein (55) (Saimiriine herpesvirus 2 (strain 11) (SaHV-2)).